Reading from the N-terminus, the 748-residue chain is Cysteine--tRNA ligase, cytoplasmic (748 aa).

Residues 1-25 (MAAAPAEQGKGKRVQPPWSPPEGTK) form a disordered region. Cys-55 provides a ligand contact to Zn(2+). Position 56 (Gly-56) interacts with L-cysteine. The 'HIGH' region motif lies at 57 to 67 (PTVYDASHMGH). Thr-96 serves as a coordination point for L-cysteine. The 'KIIK' region signature appears at 101–104 (KIIK). Positions 348, 373, and 377 each coordinate Zn(2+). His-373 contacts L-cysteine. Residues 406 to 410 (KMSKS) carry the 'KMSKS' region motif. Lys-409 serves as a coordination point for ATP. Basic and acidic residues-rich tracts occupy residues 656 to 679 (KIEEEKKRKKEEAARKKQEQEAAK) and 686 to 717 (PPHEMFKSEHDKYSKFDENGFPTHDTEGKELS). A disordered region spans residues 656 to 719 (KIEEEKKRKK…DTEGKELSKG (64 aa)).

It belongs to the class-I aminoacyl-tRNA synthetase family. Homodimer. Requires Zn(2+) as cofactor.

Its subcellular location is the cytoplasm. It catalyses the reaction tRNA(Cys) + L-cysteine + ATP = L-cysteinyl-tRNA(Cys) + AMP + diphosphate. Its function is as follows. Catalyzes the ATP-dependent ligation of cysteine to tRNA(Cys). This Gallus gallus (Chicken) protein is Cysteine--tRNA ligase, cytoplasmic (CARS1).